We begin with the raw amino-acid sequence, 212 residues long: Adenylate kinase (212 aa).

10–15 (GAGKGT) contributes to the ATP binding site. An NMP region spans residues 30-59 (STGDMFRAAMANQTEMGRLAKSYIDKGELV). AMP is bound by residues Thr-31, Arg-36, 57–59 (ELV), 86–89 (GYPR), and Gln-93. The segment at 127–159 (GRIINRKTGETFHKVFNPPVDYKEEDYYQREDD) is LID. Residues Arg-128 and 137 to 138 (TF) each bind ATP. AMP contacts are provided by Arg-156 and Arg-167. Gln-195 lines the ATP pocket.

The protein belongs to the adenylate kinase family. In terms of assembly, monomer.

It is found in the cytoplasm. The enzyme catalyses AMP + ATP = 2 ADP. It participates in purine metabolism; AMP biosynthesis via salvage pathway; AMP from ADP: step 1/1. Its function is as follows. Catalyzes the reversible transfer of the terminal phosphate group between ATP and AMP. Plays an important role in cellular energy homeostasis and in adenine nucleotide metabolism. The protein is Adenylate kinase of Streptococcus pyogenes serotype M12 (strain MGAS2096).